The following is a 107-amino-acid chain: Nucleoid-associated protein RC1337 (107 aa).

This sequence belongs to the YbaB/EbfC family. Homodimer.

The protein resides in the cytoplasm. It localises to the nucleoid. Functionally, binds to DNA and alters its conformation. May be involved in regulation of gene expression, nucleoid organization and DNA protection. The polypeptide is Nucleoid-associated protein RC1337 (Rickettsia conorii (strain ATCC VR-613 / Malish 7)).